The sequence spans 130 residues: Small ribosomal subunit protein uS9 (130 aa).

This sequence belongs to the universal ribosomal protein uS9 family.

This Caldicellulosiruptor saccharolyticus (strain ATCC 43494 / DSM 8903 / Tp8T 6331) protein is Small ribosomal subunit protein uS9.